The following is a 749-amino-acid chain: MTSKPSTSDGRAHSISHVPGTHMRGTSASHSPRPFRPCADCTCSPGLLSRQGRRASLFLRQLENSRRSSSMLLNELKGAGGGSSAGNGSVYSCDSLCAVNREVNTTDRLLKLRQEMKKHDLCCYIVPSCDEHQSEYVSLRDQRRAFISGFSGSAGVACITRDLLNFNDDHPDGKSILSTDGRYFNQARQELDYNWTLLRQNEDPITWQEWCVREALEMAKGLGNKEGMVLKIGIDPKLITFNDYVSFRKMIDTKYDAKGKVELVPVEENLVDSIWPDFETLPERPCNDLLLLKYEFHGEEFKDKKEKLLKKLNDKASSATTGRNTFIVVALDEICWLLNLRGSDIDYNPVFFSYVAINEDETILFTNNPFNDDISEYFKINGIEVRPYEQIWEHLTKITSQASSAEHEFLIPDSASWQMVRCLNTSTNANGAIAKKMTAQNFAIIHSPIDVLKSIKNDIEIKNAHKAQVKDAVCLVQYFAWLEQQLVGREALIDEYRAAEKLTEIRKTQRNFMGNSFETISSTGSNAAIIHYSPPVENSSMIDPTKIYLCDSGSQFLEGTTDITRTIHLTKPTKEEMDNYTLVLKGGLALERLIFPENTPGFNIDAIARQFLWSRGLDYKHGTGHGIGSFLNVHEGPMGVGFRPHLMNFPLRAGNIISNEPGYYKDGEYGIRIESDMLIKKATEKGNFLKFENMTVVPYCRKLINTKLLNEEEKTQINEYHARVWRTIVHFLQPQSISYKWLKRETSPL.

Residues 1–33 are disordered; sequence MTSKPSTSDGRAHSISHVPGTHMRGTSASHSPR. Phosphoserine is present on residues Ser69, Ser92, and Ser95. Mn(2+)-binding residues include Asp551, Asp562, Glu660, and Glu674.

The protein belongs to the peptidase M24B family. As to quaternary structure, homodimer. Interacts with FRA2. Mn(2+) serves as cofactor.

The protein localises to the cytoplasm. The catalysed reaction is Release of any N-terminal amino acid, including proline, that is linked to proline, even from a dipeptide or tripeptide.. Functionally, involved in the regulation of the iron regulon in responss to decreased mitochondrial iron-sulfur cluster synthesis. In Saccharomyces cerevisiae (strain ATCC 204508 / S288c) (Baker's yeast), this protein is Putative Xaa-Pro aminopeptidase FRA1 (FRA1).